The primary structure comprises 268 residues: Ribosomal RNA small subunit methyltransferase A (268 aa).

The S-adenosyl-L-methionine site is built by asparagine 17, leucine 19, glycine 44, glutamate 65, aspartate 89, and asparagine 110.

It belongs to the class I-like SAM-binding methyltransferase superfamily. rRNA adenine N(6)-methyltransferase family. RsmA subfamily.

Its subcellular location is the cytoplasm. It carries out the reaction adenosine(1518)/adenosine(1519) in 16S rRNA + 4 S-adenosyl-L-methionine = N(6)-dimethyladenosine(1518)/N(6)-dimethyladenosine(1519) in 16S rRNA + 4 S-adenosyl-L-homocysteine + 4 H(+). Specifically dimethylates two adjacent adenosines (A1518 and A1519) in the loop of a conserved hairpin near the 3'-end of 16S rRNA in the 30S particle. May play a critical role in biogenesis of 30S subunits. This is Ribosomal RNA small subunit methyltransferase A from Acidithiobacillus ferrooxidans (strain ATCC 53993 / BNL-5-31) (Leptospirillum ferrooxidans (ATCC 53993)).